The chain runs to 205 residues: Small ribosomal subunit protein uS4 (205 aa).

The segment at 18 to 49 (NIWGRPKSPVNKREYGPGQHGQRRKGKLSDFG) is disordered. The S4 RNA-binding domain maps to 94-157 (RRLDTVVYRA…KQLALVLEAN (64 aa)).

The protein belongs to the universal ribosomal protein uS4 family. Part of the 30S ribosomal subunit. Contacts protein S5. The interaction surface between S4 and S5 is involved in control of translational fidelity.

Its function is as follows. One of the primary rRNA binding proteins, it binds directly to 16S rRNA where it nucleates assembly of the body of the 30S subunit. Functionally, with S5 and S12 plays an important role in translational accuracy. The chain is Small ribosomal subunit protein uS4 from Nitrobacter winogradskyi (strain ATCC 25391 / DSM 10237 / CIP 104748 / NCIMB 11846 / Nb-255).